A 513-amino-acid chain; its full sequence is MELETLISWLLFSTSLFWFLFLATKTKSKPPKTPSSTTNTPIPKSYPIFGSAFSLLANFHRRIQWTSDILQTIPSSTFVLHRPFGARQVFTAQPAVVQHILRTNFTCYGKGLTFYQSINDFLGDGIFNADGESWKFQRQISSHEFNTRSLRKFVETVVDVELSDRLVPVLSQASNSQTTLDFQDILQRLTFDNICMIAFGYDPEYLLPSLPEIPFAKAFDESSQLSIERLNALIPLLWKVKRFLNIGVERQLKEAVAEVRGLATKIVKNKKKELKEKALQSESESVDLLSRFLSSGHSDESFVTDMVISIILAGRDTTSAALTWFFWLLSKHSHVENEILKEITGKSETVGYDEVKDMVYTHAALCESMRLYPPLPVDTKVAVHDDVLPDGTLVKKGWRVTYHIYAMGRSEKIWGPDWAEFRPERWLSRDEVGKWSFVGIDYYSYPVFQAGPRVCIGKEMAFLQMKRVVAGIMGRFRVVPAMVEGIEPEYTAHFTSVMKGGFPVKIEKRSPLV.

Residues 7–24 form a helical membrane-spanning segment; that stretch reads ISWLLFSTSLFWFLFLAT. Cys455 is a binding site for heme.

Belongs to the cytochrome P450 family. Requires heme as cofactor. As to expression, weakly expressed in seedlings.

It localises to the endoplasmic reticulum membrane. Its function is as follows. Catalyzes the omega-hydroxylation of various fatty acids (FA). The substrate specificity is higher for myristate &gt; laurate = palmitate (C14&gt;C16=C12). The sequence is that of Cytochrome P450 94A2 (CYP94A2) from Vicia sativa (Spring vetch).